The following is a 903-amino-acid chain: Protein translocase subunit SecA (903 aa).

Residues Gln-87, 105 to 109 (GEGKT), and Asp-507 contribute to the ATP site. The tract at residues 854–893 (STMADSSGDVKSSTAESKAPYVRDGRKVGRNEPCPCGSGK) is disordered. Positions 856 to 869 (MADSSGDVKSSTAE) are enriched in polar residues. Basic and acidic residues predominate over residues 874-883 (YVRDGRKVGR). Zn(2+)-binding residues include Cys-887, Cys-889, Cys-898, and His-899.

Belongs to the SecA family. As to quaternary structure, monomer and homodimer. Part of the essential Sec protein translocation apparatus which comprises SecA, SecYEG and auxiliary proteins SecDF-YajC and YidC. The cofactor is Zn(2+).

The protein resides in the cell inner membrane. Its subcellular location is the cytoplasm. It carries out the reaction ATP + H2O + cellular proteinSide 1 = ADP + phosphate + cellular proteinSide 2.. Its function is as follows. Part of the Sec protein translocase complex. Interacts with the SecYEG preprotein conducting channel. Has a central role in coupling the hydrolysis of ATP to the transfer of proteins into and across the cell membrane, serving both as a receptor for the preprotein-SecB complex and as an ATP-driven molecular motor driving the stepwise translocation of polypeptide chains across the membrane. This chain is Protein translocase subunit SecA, found in Nitrosococcus oceani (strain ATCC 19707 / BCRC 17464 / JCM 30415 / NCIMB 11848 / C-107).